Here is a 47-residue protein sequence, read N- to C-terminus: Conotoxin reg3.11 (47 aa).

Residues 1–31 constitute a propeptide that is removed on maturation; that stretch reads DQPVERHAENKRHLIPAVMRAMTMNADRRVQ. 3 cysteine pairs are disulfide-bonded: cysteine 32-cysteine 44, cysteine 33-cysteine 42, and cysteine 38-cysteine 45. A propeptide spanning residues 46-47 is cleaved from the precursor; sequence YH.

It belongs to the conotoxin M superfamily. In terms of tissue distribution, expressed by the venom duct.

Its subcellular location is the secreted. In Conus regius (Crown cone), this protein is Conotoxin reg3.11.